A 250-amino-acid chain; its full sequence is ATP synthase subunit b 2 (250 aa).

The chain crosses the membrane as a helical span at residues 2–22; it reads LIDWFTVFAQILNFVILLGLL.

The protein belongs to the ATPase B chain family. In terms of assembly, F-type ATPases have 2 components, F(1) - the catalytic core - and F(0) - the membrane proton channel. F(1) has five subunits: alpha(3), beta(3), gamma(1), delta(1), epsilon(1). F(0) has four main subunits: a(1), b(1), b'(1) and c(10-14). The alpha and beta chains form an alternating ring which encloses part of the gamma chain. F(1) is attached to F(0) by a central stalk formed by the gamma and epsilon chains, while a peripheral stalk is formed by the delta, b and b' chains.

The protein localises to the cellular thylakoid membrane. In terms of biological role, f(1)F(0) ATP synthase produces ATP from ADP in the presence of a proton or sodium gradient. F-type ATPases consist of two structural domains, F(1) containing the extramembraneous catalytic core and F(0) containing the membrane proton channel, linked together by a central stalk and a peripheral stalk. During catalysis, ATP synthesis in the catalytic domain of F(1) is coupled via a rotary mechanism of the central stalk subunits to proton translocation. Its function is as follows. Component of the F(0) channel, it forms part of the peripheral stalk, linking F(1) to F(0). This Picosynechococcus sp. (strain ATCC 27264 / PCC 7002 / PR-6) (Agmenellum quadruplicatum) protein is ATP synthase subunit b 2.